Reading from the N-terminus, the 177-residue chain is Peptide deformylase 2 (177 aa).

Residues Cys-99 and His-141 each contribute to the Fe cation site. The active site involves Glu-142. His-145 lines the Fe cation pocket.

The protein belongs to the polypeptide deformylase family. Requires Fe(2+) as cofactor.

The catalysed reaction is N-terminal N-formyl-L-methionyl-[peptide] + H2O = N-terminal L-methionyl-[peptide] + formate. In terms of biological role, removes the formyl group from the N-terminal Met of newly synthesized proteins. Requires at least a dipeptide for an efficient rate of reaction. N-terminal L-methionine is a prerequisite for activity but the enzyme has broad specificity at other positions. The chain is Peptide deformylase 2 from Ralstonia nicotianae (strain ATCC BAA-1114 / GMI1000) (Ralstonia solanacearum).